The primary structure comprises 185 residues: Large ribosomal subunit protein uL5 (185 aa).

This sequence belongs to the universal ribosomal protein uL5 family. In terms of assembly, part of the 50S ribosomal subunit; part of the 5S rRNA/L5/L18/L25 subcomplex. Contacts the 5S rRNA and the P site tRNA. Forms a bridge to the 30S subunit in the 70S ribosome.

Functionally, this is one of the proteins that bind and probably mediate the attachment of the 5S RNA into the large ribosomal subunit, where it forms part of the central protuberance. In the 70S ribosome it contacts protein S13 of the 30S subunit (bridge B1b), connecting the 2 subunits; this bridge is implicated in subunit movement. Contacts the P site tRNA; the 5S rRNA and some of its associated proteins might help stabilize positioning of ribosome-bound tRNAs. In Bacteroides fragilis (strain ATCC 25285 / DSM 2151 / CCUG 4856 / JCM 11019 / LMG 10263 / NCTC 9343 / Onslow / VPI 2553 / EN-2), this protein is Large ribosomal subunit protein uL5.